A 287-amino-acid polypeptide reads, in one-letter code: MTSLQRKGPQTRILSTGEEEKLKRDQALVSAFKQQKLEKEAQKNWDLFYKRNSTNFFKDRHWTTREFEELRSCREYEGQKLTLLEAGCGVGNCLFPLLEEDSNIFAYACDFSPRAVDYVKQHPLYNAERCKVFQCDLTRDDLLDHIPPESVDAVTLIFVLSAVHPEKMHLVLLNVYKVLKPGRSVLFRDYGLNDHAMLRFKAGSKLGENFYVRQDGTRSYFFTDEFLAKLFVDAGYEEVVNEYVFRETVNKKEGLCVPRVFLQSKFRKPPKDPAPTTDSASLLRKEF.

7 residues coordinate S-adenosyl-L-methionine: W45, Y49, G87, D110, D136, L137, and I157. Residues 267 to 287 form a disordered region; it reads RKPPKDPAPTTDSASLLRKEF.

This sequence belongs to the methyltransferase superfamily. METL family. Monomer. Interacts with SARS1/SerRS; interaction is mediated via tRNA(Ser) and is required for N(3)-methylcytidine methylation.

Its subcellular location is the cytoplasm. It is found in the nucleus. It catalyses the reaction cytidine(32) in tRNA(Ser) + S-adenosyl-L-methionine = N(3)-methylcytidine(32) in tRNA(Ser) + S-adenosyl-L-homocysteine + H(+). S-adenosyl-L-methionine-dependent methyltransferase that mediates N(3)-methylcytidine modification of residue 32 of the tRNA anticodon loop of tRNA(Ser), including tRNA(Ser)(UGA) and tRNA(Ser)(GCU). Interaction with SARS1/SerRS is required for N(3)-methylcytidine methylation. This is tRNA N(3)-cytidine methyltransferase METTL6 (Mettl6) from Rattus norvegicus (Rat).